A 307-amino-acid polypeptide reads, in one-letter code: tRNA pseudouridine synthase B (307 aa).

Catalysis depends on D39, which acts as the Nucleophile.

The protein belongs to the pseudouridine synthase TruB family. Type 1 subfamily.

The enzyme catalyses uridine(55) in tRNA = pseudouridine(55) in tRNA. Responsible for synthesis of pseudouridine from uracil-55 in the psi GC loop of transfer RNAs. This Lactiplantibacillus plantarum (strain ATCC BAA-793 / NCIMB 8826 / WCFS1) (Lactobacillus plantarum) protein is tRNA pseudouridine synthase B.